The sequence spans 147 residues: Cell division protein SepF 1 (147 aa).

This sequence belongs to the SepF family. Homodimer. Interacts with FtsZ.

The protein resides in the cytoplasm. In terms of biological role, cell division protein that is part of the divisome complex and is recruited early to the Z-ring. Probably stimulates Z-ring formation, perhaps through the cross-linking of FtsZ protofilaments. Its function overlaps with FtsA. The sequence is that of Cell division protein SepF 1 from Desulforamulus reducens (strain ATCC BAA-1160 / DSM 100696 / MI-1) (Desulfotomaculum reducens).